Here is a 375-residue protein sequence, read N- to C-terminus: Dual-specificity RNA methyltransferase RlmN (375 aa).

Residue glutamate 93 is the Proton acceptor of the active site. The Radical SAM core domain occupies 99–346; sequence ETNRGTLCVS…TTTRKTRGDD (248 aa). Cysteine 106 and cysteine 351 are oxidised to a cystine. [4Fe-4S] cluster contacts are provided by cysteine 113, cysteine 117, and cysteine 120. S-adenosyl-L-methionine is bound by residues 177–178, serine 209, 231–233, and asparagine 308; these read GE and SLH. The active-site S-methylcysteine intermediate is cysteine 351.

This sequence belongs to the radical SAM superfamily. RlmN family. It depends on [4Fe-4S] cluster as a cofactor.

It is found in the cytoplasm. It catalyses the reaction adenosine(2503) in 23S rRNA + 2 reduced [2Fe-2S]-[ferredoxin] + 2 S-adenosyl-L-methionine = 2-methyladenosine(2503) in 23S rRNA + 5'-deoxyadenosine + L-methionine + 2 oxidized [2Fe-2S]-[ferredoxin] + S-adenosyl-L-homocysteine. The catalysed reaction is adenosine(37) in tRNA + 2 reduced [2Fe-2S]-[ferredoxin] + 2 S-adenosyl-L-methionine = 2-methyladenosine(37) in tRNA + 5'-deoxyadenosine + L-methionine + 2 oxidized [2Fe-2S]-[ferredoxin] + S-adenosyl-L-homocysteine. Its function is as follows. Specifically methylates position 2 of adenine 2503 in 23S rRNA and position 2 of adenine 37 in tRNAs. m2A2503 modification seems to play a crucial role in the proofreading step occurring at the peptidyl transferase center and thus would serve to optimize ribosomal fidelity. The chain is Dual-specificity RNA methyltransferase RlmN from Azoarcus sp. (strain BH72).